Consider the following 298-residue polypeptide: Protoheme IX farnesyltransferase 1 (298 aa).

The next 9 helical transmembrane spans lie at 21–41 (QVWW…INSF), 43–63 (SYLI…SMGA), 94–114 (KGAF…LLIF), 118–138 (LAAL…SYLL), 144–164 (YSII…WYTV), 168–188 (FSWI…VHVW), 215–235 (TAVS…IPYF), 236–256 (LGFF…PIVI), and 274–294 (FIYT…IHII).

It belongs to the UbiA prenyltransferase family. Protoheme IX farnesyltransferase subfamily.

The protein resides in the cell membrane. It carries out the reaction heme b + (2E,6E)-farnesyl diphosphate + H2O = Fe(II)-heme o + diphosphate. Its pathway is porphyrin-containing compound metabolism; heme O biosynthesis; heme O from protoheme: step 1/1. Its function is as follows. Converts heme B (protoheme IX) to heme O by substitution of the vinyl group on carbon 2 of heme B porphyrin ring with a hydroxyethyl farnesyl side group. In Picrophilus torridus (strain ATCC 700027 / DSM 9790 / JCM 10055 / NBRC 100828 / KAW 2/3), this protein is Protoheme IX farnesyltransferase 1.